The chain runs to 341 residues: MPELNIAIDAMGGDNGPSIVIEALEKAVHRYPDVKFTVVGHEQQLTPLLDKFNLSSHPSINLVHAEQVIEMDDKPGQSLRSKPESSMRVALQSLTDGNCQAMVSGGNTGALMTNAYFTLKTLPGVLRPALMTALPNQTGGKSYLLDLGANASCDSETLFQFGVMGAVAAEYLSGVPAPKISLLNMGEEDIKGNDVVRNAAARLAQCEQLNYIGFIEGNHLFSGRADVVVCDGFVGNVALKSCEGLATFIIDQMRDTLNSHWLYRFFFRFLQKRTHKSWDRLKPDHYNGASLIGLRHVVIKSHGSASAGAFYSAIQQAVAEAHEQLPERIKHRVEAVLSEQL.

Belongs to the PlsX family. In terms of assembly, homodimer. Probably interacts with PlsY.

Its subcellular location is the cytoplasm. It catalyses the reaction a fatty acyl-[ACP] + phosphate = an acyl phosphate + holo-[ACP]. The protein operates within lipid metabolism; phospholipid metabolism. Its function is as follows. Catalyzes the reversible formation of acyl-phosphate (acyl-PO(4)) from acyl-[acyl-carrier-protein] (acyl-ACP). This enzyme utilizes acyl-ACP as fatty acyl donor, but not acyl-CoA. In Idiomarina loihiensis (strain ATCC BAA-735 / DSM 15497 / L2-TR), this protein is Phosphate acyltransferase.